The primary structure comprises 212 residues: ER lumen protein-retaining receptor 1 (212 aa).

The Lumenal segment spans residues 1 to 4; that stretch reads MNLF. Residues 5-24 traverse the membrane as a helical segment; the sequence is RFLGDLSHLLAIILLLLKIW. Topologically, residues 25 to 32 are cytoplasmic; that stretch reads KSRSCAGI. A helical transmembrane segment spans residues 33 to 52; it reads SGKSQVLFAVVFTARYLDLF. The segment at 47–48 is interaction with the K-D-E-L motif on target proteins; it reads RY. Residues 53–58 lie on the Lumenal side of the membrane; that stretch reads TNYISL. Residues 59-79 form a helical membrane-spanning segment; it reads YNTCMKVVYIACSFTTVWLIY. Topologically, residues 80 to 92 are cytoplasmic; sequence SKFKATYDGNHDT. Residues 93–110 traverse the membrane as a helical segment; the sequence is FRVEFLVVPTAILAFLVN. At 111-116 the chain is on the lumenal side; the sequence is HDFTPL. The chain crosses the membrane as a helical span at residues 117–135; sequence EILWTFSIYLESVAILPQL. Topologically, residues 136 to 149 are cytoplasmic; it reads FMVSKTGEAETITS. Residues 150-168 traverse the membrane as a helical segment; it reads HYLFALGVYRTLYLFNWIW. The segment at 159–169 is interaction with the K-D-E-L motif on target proteins; sequence RTLYLFNWIWR. Residues 169 to 178 lie on the Lumenal side of the membrane; sequence RYHFEGFFDL. The chain crosses the membrane as a helical span at residues 179–199; the sequence is IAIVAGLVQTVLYCDFFYLYI. Residues 200–212 are Cytoplasmic-facing; the sequence is TKVLKGKKLSLPA. The important for recycling of cargo proteins with the sequence motif K-D-E-L from the Golgi to the endoplasmic reticulum stretch occupies residues 204–207; sequence KGKK. The residue at position 209 (Ser-209) is a Phosphoserine; by PKA.

This sequence belongs to the ERD2 family. Upon ligand binding the receptor oligomerizes and interacts with components of the transport machinery such as ARFGAP1 and ARF1. Post-translationally, phosphorylation by PKA at Ser-209 is required for endoplasmic reticulum retention function.

Its subcellular location is the golgi apparatus membrane. It is found in the cytoplasmic vesicle. The protein localises to the COPI-coated vesicle membrane. The protein resides in the endoplasmic reticulum membrane. It localises to the endoplasmic reticulum-Golgi intermediate compartment membrane. Receptor for the C-terminal sequence motif K-D-E-L that is present on endoplasmic reticulum resident proteins and that mediates their recycling from the Golgi back to the endoplasmic reticulum. The sequence is that of ER lumen protein-retaining receptor 1 (KDELR1) from Homo sapiens (Human).